The sequence spans 519 residues: MYIPGPLRLSSYLLPFLSSPSPPAQSSPDTRTISFKPVHAHGHAFVDNASTPTLLFLDQSPSASLYAHDYPIGAFGDDYMLPRLTSDVLEIRTRKKLIRRPKVRPPRIISWAQSYRAQALHFNGINNNNDNSNKSISLPESWLAPDLANPSDEWSDVEVTVPDLTDRQTVITLAKMSSNAYVTPGGAGWYTLNDWNASMPFGWEPDADGLRGHVFADEKNETVIISIKGTSAGVLGSGGPTAKNDKFNDNLLFSCCCARVDFSWTPVCDCYAGGYKCGQTCLEDALVSESVYATVGTNLYNNITYMYPNATIWLTGHSLGGAVSSLIGLSFGAPAVTYESPGELLPASRLHLPLPPGMPANLSGITHVYHTADPIAMGVCNGPYSSCYAAGFAMESKCHTGETILYDTVRVKGWSVDVRTHRIEEVIDKVLADPWPEEEEGKSGVWEKAVEGWYRAADRVRAALDESVVRDDVNVWWGWGRRGPKRQPGGEDPKHGGVPKPVSEEDCVDCYKWEFGEWN.

Over 1–5 the chain is Cytoplasmic; that stretch reads MYIPG. Residues 6–26 form a helical; Signal-anchor for type II membrane protein membrane-spanning segment; it reads PLRLSSYLLPFLSSPSPPAQS. Residues 27–519 lie on the Lumenal side of the membrane; it reads SPDTRTISFK…CYKWEFGEWN (493 aa). Asn-48, Asn-133, Asn-196, Asn-220, Asn-302, and Asn-309 each carry an N-linked (GlcNAc...) asparagine glycan. The Charge relay system role is filled by Ser-318. Asn-361 carries N-linked (GlcNAc...) asparagine glycosylation. The tract at residues 481–502 is disordered; sequence RRGPKRQPGGEDPKHGGVPKPV.

This sequence belongs to the AB hydrolase superfamily. Lipase family. As to quaternary structure, binds to both phosphatidylinositol (PI) and phosphatidylinositol 3,5-bisphosphate (PIP2).

The protein localises to the endosome. It is found in the multivesicular body membrane. Its subcellular location is the prevacuolar compartment membrane. The enzyme catalyses a triacylglycerol + H2O = a diacylglycerol + a fatty acid + H(+). Functionally, lipase which is essential for lysis of subvacuolar cytoplasm to vacuole targeted bodies and intravacuolar autophagic bodies. Involved in the lysis of intravacuolar multivesicular body (MVB) vesicles. The intravacuolar membrane disintegration by ATG15 is critical to life span extension. The sequence is that of Putative lipase ATG15 (ATG15) from Cryptococcus neoformans var. neoformans serotype D (strain B-3501A) (Filobasidiella neoformans).